The following is a 581-amino-acid chain: Laccase-1 (581 aa).

An N-terminal signal peptide occupies residues 1 to 25 (MENLGFLIISTFLLLFTTLLPYSSA). 2 consecutive Plastocyanin-like domains span residues 34–150 (NVEW…PRQP) and 161–312 (EIPI…YTGK). Residue Asn-80 is glycosylated (N-linked (GlcNAc...) asparagine). Residues His-84, His-86, His-129, and His-131 each coordinate Cu cation. Residues Asn-241, Asn-300, Asn-386, and Asn-403 are each glycosylated (N-linked (GlcNAc...) asparagine). Residues 429–565 (DFPEKPPNRF…AMGFIVKDGP (137 aa)) form the Plastocyanin-like 3 domain. Cu cation-binding residues include His-482, His-485, His-487, His-544, Cys-545, His-546, and His-550.

It belongs to the multicopper oxidase family. The cofactor is Cu cation. As to expression, expressed in roots, stems and flowers.

Its subcellular location is the secreted. The protein resides in the extracellular space. It is found in the apoplast. It catalyses the reaction 4 hydroquinone + O2 = 4 benzosemiquinone + 2 H2O. In terms of biological role, lignin degradation and detoxification of lignin-derived products. This Arabidopsis thaliana (Mouse-ear cress) protein is Laccase-1 (LAC1).